The sequence spans 217 residues: Probable GTP-binding protein EngB (217 aa).

Residues 44–217 enclose the EngB-type G domain; sequence DRIEVCFAGR…TLRTIVATLG (174 aa). GTP is bound by residues 52-59, 79-83, 97-100, 164-167, and 198-200; these read GRSNVGKS, GRTQE, DLPG, TKAD, and TSS. 2 residues coordinate Mg(2+): Ser-59 and Thr-81.

It belongs to the TRAFAC class TrmE-Era-EngA-EngB-Septin-like GTPase superfamily. EngB GTPase family. The cofactor is Mg(2+).

Its function is as follows. Necessary for normal cell division and for the maintenance of normal septation. This is Probable GTP-binding protein EngB from Cereibacter sphaeroides (strain ATCC 17023 / DSM 158 / JCM 6121 / CCUG 31486 / LMG 2827 / NBRC 12203 / NCIMB 8253 / ATH 2.4.1.) (Rhodobacter sphaeroides).